The sequence spans 78 residues: Large ribosomal subunit protein bL31 (78 aa).

Belongs to the bacterial ribosomal protein bL31 family. Type A subfamily. Part of the 50S ribosomal subunit.

Its function is as follows. Binds the 23S rRNA. The sequence is that of Large ribosomal subunit protein bL31 (rpmE) from Rickettsia typhi (strain ATCC VR-144 / Wilmington).